Consider the following 376-residue polypeptide: Protein STRICTOSIDINE SYNTHASE-LIKE 8 (376 aa).

The N-terminal stretch at 1 to 31 (MPISRRVLTPITAAPVILAVLCFFFWSSIIG) is a signal peptide. Residues N98, N172, and N224 are each glycosylated (N-linked (GlcNAc...) asparagine).

Belongs to the strictosidine synthase family.

It localises to the vacuole. The polypeptide is Protein STRICTOSIDINE SYNTHASE-LIKE 8 (Arabidopsis thaliana (Mouse-ear cress)).